We begin with the raw amino-acid sequence, 1375 residues long: DNA-directed RNA polymerase subunit beta (1375 aa).

The protein belongs to the RNA polymerase beta chain family. The RNAP catalytic core consists of 2 alpha, 1 beta, 1 beta' and 1 omega subunit. When a sigma factor is associated with the core the holoenzyme is formed, which can initiate transcription.

The catalysed reaction is RNA(n) + a ribonucleoside 5'-triphosphate = RNA(n+1) + diphosphate. In terms of biological role, DNA-dependent RNA polymerase catalyzes the transcription of DNA into RNA using the four ribonucleoside triphosphates as substrates. The polypeptide is DNA-directed RNA polymerase subunit beta (Coxiella burnetii (strain CbuG_Q212) (Coxiella burnetii (strain Q212))).